A 902-amino-acid polypeptide reads, in one-letter code: Ribonuclease E (902 aa).

The S1 motif domain occupies 39 to 119 (SNIYKGKITR…GTKGAALTTF (81 aa)). Residues aspartate 303 and aspartate 346 each contribute to the Mg(2+) site. Zn(2+) contacts are provided by cysteine 404 and cysteine 407. The segment at 404–407 (CPRC) is required for zinc-mediated homotetramerization and catalytic activity. Residues 881–902 (GKNSAGVHSATNFSNSPVSKLK) are disordered. Residues 889–902 (SATNFSNSPVSKLK) are compositionally biased toward polar residues.

The protein belongs to the RNase E/G family. RNase E subfamily. As to quaternary structure, component of the RNA degradosome, which is a multiprotein complex involved in RNA processing and mRNA degradation. Within the RNA degradosome, RNase E assembles into a homotetramer formed by a dimer of dimers. Zn(2+) is required as a cofactor. It depends on Mg(2+) as a cofactor.

The protein localises to the cytoplasm. It is found in the cell inner membrane. The enzyme catalyses Endonucleolytic cleavage of single-stranded RNA in A- and U-rich regions.. Its function is as follows. Endoribonuclease that plays a central role in RNA processing and decay. Required for the maturation of 5S and 16S rRNAs and the majority of tRNAs. Also involved in the degradation of most mRNAs. The chain is Ribonuclease E from Buchnera aphidicola subsp. Acyrthosiphon pisum (strain APS) (Acyrthosiphon pisum symbiotic bacterium).